The primary structure comprises 487 residues: MQKIWLFSIITIFLITELQCYPNSAEERLLSYIFDGYNSLIRPVLNASSPPIEVFFSLAFVLLINVDEKNQIMQTNVWPTMKWNDYQMQWDPREFDGIKTIRVPPDKVWLPDIVLFNNADGNYLVSFYSNVVVEHTGDMLWVPPAVYKSSCLIDVEFFPFDEQVCSLTFGSWTFRKDELQLSYLSGKRHVELNDYLPSGVWDLIDAPGLLIDERSKISYQIKIRRKALFYTVILIMPTVLMAFLSMMVFYLPAESSEKITLAISILLALVVFLLVVSKILPPTSSTIPLMAKYLLMTFIMNMITIMVSVIIINVYFRGPATHIMPNWVKTVFLKFLPVLFVMRRPESTEKELAKMKREKRERRSMKSALKTFFKRNDAKISEQPKQTSRKDGSSSEEKLSSDAKKAIEAIEYITTHLTHDNAFKRQREEWKFVSVVIDRLLLYLFFAVTTGGTVGILLSAPNVFEQVNQTSVIERLKQQAAEEMLNS.

The signal sequence occupies residues 1-20; the sequence is MQKIWLFSIITIFLITELQC. At 21–231 the chain is on the extracellular side; that stretch reads YPNSAEERLL…KIRRKALFYT (211 aa). Asn-46 carries N-linked (GlcNAc...) asparagine glycosylation. A disulfide bond links Cys-151 and Cys-165. The next 3 helical transmembrane spans lie at 232-252, 259-279, and 294-314; these read VILIMPTVLMAFLSMMVFYLP, ITLAISILLALVVFLLVVSKI, and LLMTFIMNMITIMVSVIIINV. Residues 315–439 lie on the Cytoplasmic side of the membrane; that stretch reads YFRGPATHIM…WKFVSVVIDR (125 aa). The interval 380–400 is disordered; it reads ISEQPKQTSRKDGSSSEEKLS. A helical transmembrane segment spans residues 440 to 460; sequence LLLYLFFAVTTGGTVGILLSA.

The protein belongs to the ligand-gated ion channel (TC 1.A.9) family. Acetylcholine receptor (TC 1.A.9.1) subfamily. In terms of assembly, component of nicotinic acetylcholine receptor. In cholinergic motoneurons, composed of 2 non-alpha subunits acr-2 and acr-3, and 3 alpha subunits unc-38, unc-63 and acr-12.

The protein localises to the postsynaptic cell membrane. The protein resides in the cell membrane. In terms of biological role, non-alpha subunit of nicotinic acetylcholine receptor (nAChR). Probably acts in cholinergic motoneurons to regulate presynaptic neurotransmitter release, thereby ensuring normal level of excitation of cholinergic motoneurons during locomotion. This Caenorhabditis elegans protein is Acetylcholine receptor subunit beta-type acr-3 (acr-3).